Here is a 968-residue protein sequence, read N- to C-terminus: RNA polymerase-associated protein RapA (968 aa).

The region spanning 164 to 334 (DVGRRHAPRV…FARLRLLDPN (171 aa)) is the Helicase ATP-binding domain. An ATP-binding site is contributed by 177-184 (DEVGLGKT). The short motif at 280 to 283 (DEAH) is the DEAH box element. Positions 490-662 (RVEWLMGYLT…YLASPDQTEG (173 aa)) constitute a Helicase C-terminal domain.

It belongs to the SNF2/RAD54 helicase family. RapA subfamily. Interacts with the RNAP. Has a higher affinity for the core RNAP than for the holoenzyme. Its ATPase activity is stimulated by binding to RNAP.

Its function is as follows. Transcription regulator that activates transcription by stimulating RNA polymerase (RNAP) recycling in case of stress conditions such as supercoiled DNA or high salt concentrations. Probably acts by releasing the RNAP, when it is trapped or immobilized on tightly supercoiled DNA. Does not activate transcription on linear DNA. Probably not involved in DNA repair. The chain is RNA polymerase-associated protein RapA from Escherichia coli (strain 55989 / EAEC).